Here is a 207-residue protein sequence, read N- to C-terminus: Ion-translocating oxidoreductase complex subunit B (207 aa).

The hydrophobic stretch occupies residues 1 to 29 (MLDLSIIAYLLIAICLIALIFGALLGYFS). The 59-residue stretch at 35 to 93 (EADPIVDQIDAILPQSQCGQCGYPGCKPYAEAIANGDQITKCVPGGQPLVVKIAELMGV) folds into the 4Fe-4S domain. 12 residues coordinate [4Fe-4S] cluster: cysteine 52, cysteine 55, cysteine 60, cysteine 76, cysteine 116, cysteine 119, cysteine 122, cysteine 126, cysteine 146, cysteine 149, cysteine 152, and cysteine 156. 2 consecutive 4Fe-4S ferredoxin-type domains span residues 107-136 (KVAL…GTNK) and 137-166 (AMHT…MIKV).

This sequence belongs to the 4Fe4S bacterial-type ferredoxin family. RnfB subfamily. As to quaternary structure, the complex is composed of six subunits: RnfA, RnfB, RnfC, RnfD, RnfE and RnfG. It depends on [4Fe-4S] cluster as a cofactor.

It is found in the cell inner membrane. In terms of biological role, part of a membrane-bound complex that couples electron transfer with translocation of ions across the membrane. The protein is Ion-translocating oxidoreductase complex subunit B of Haemophilus ducreyi (strain 35000HP / ATCC 700724).